We begin with the raw amino-acid sequence, 213 residues long: Uridine kinase (213 aa).

ATP is bound at residue 13-20 (GASASGKS).

Belongs to the uridine kinase family.

It is found in the cytoplasm. It catalyses the reaction uridine + ATP = UMP + ADP + H(+). The catalysed reaction is cytidine + ATP = CMP + ADP + H(+). It participates in pyrimidine metabolism; CTP biosynthesis via salvage pathway; CTP from cytidine: step 1/3. Its pathway is pyrimidine metabolism; UMP biosynthesis via salvage pathway; UMP from uridine: step 1/1. This is Uridine kinase from Histophilus somni (strain 129Pt) (Haemophilus somnus).